Here is a 436-residue protein sequence, read N- to C-terminus: GTPase Der (436 aa).

2 consecutive EngA-type G domains span residues 4–167 (PVVA…PKDH) and 176–351 (IKFC…DNHA). Residues 10–17 (GRPNVGKS), 57–61 (DTGGI), 119–122 (NKID), 182–189 (GRPNVGKS), 229–233 (DTAGM), and 294–297 (NKWD) each bind GTP. In terms of domain architecture, KH-like spans 352 to 436 (MRVQTNVLNE…PIKIIARPRK (85 aa)).

The protein belongs to the TRAFAC class TrmE-Era-EngA-EngB-Septin-like GTPase superfamily. EngA (Der) GTPase family. Associates with the 50S ribosomal subunit.

Its function is as follows. GTPase that plays an essential role in the late steps of ribosome biogenesis. The chain is GTPase Der from Geobacillus thermodenitrificans (strain NG80-2).